We begin with the raw amino-acid sequence, 384 residues long: GDP-mannose transporter (384 aa).

At Met1 to Ser40 the chain is on the cytoplasmic side. The chain crosses the membrane as a helical span at residues Ile41 to Val61. Residues Met62–Gly69 are Lumenal-facing. The chain crosses the membrane as a helical span at residues Leu70–Ile90. The Cytoplasmic segment spans residues Gln91–Arg110. A helical membrane pass occupies residues Lys111 to Ser127. Topologically, residues Lys128–Ser134 are lumenal. A helical transmembrane segment spans residues Ile135–Tyr151. Residues Gly152–Ser160 are Cytoplasmic-facing. Residues Val161–Ala182 form a helical membrane-spanning segment. The Lumenal segment spans residues Asp183–Thr200. A helical transmembrane segment spans residues Leu201–Gly221. The Cytoplasmic portion of the chain corresponds to Met222–Thr236. A helical transmembrane segment spans residues Leu237 to Met257. Topologically, residues Glu258 to Asn276 are lumenal. Residue Asn264 is glycosylated (N-linked (GlcNAc...) asparagine). The chain crosses the membrane as a helical span at residues Ile277–Trp297. The Cytoplasmic portion of the chain corresponds to Cys298–Thr305. A helical transmembrane segment spans residues Thr306–Phe326. The Lumenal segment spans residues Asp327–Pro329. A helical membrane pass occupies residues Val330–Val350. The Cytoplasmic portion of the chain corresponds to Ala351 to Ser384. The tract at residues Leu364–Ser384 is disordered. Residues Pro369–Ser384 show a composition bias toward polar residues.

Belongs to the TPT transporter family. SLC35D subfamily. Homooligomer.

Its subcellular location is the golgi apparatus membrane. The protein localises to the cytoplasmic vesicle membrane. It is found in the endoplasmic reticulum membrane. Functionally, involved in the import of GDP-mannose from the cytoplasm into the Golgi lumen. This is GDP-mannose transporter (gmt1) from Aspergillus terreus (strain NIH 2624 / FGSC A1156).